The primary structure comprises 469 residues: GTPase Der (469 aa).

EngA-type G domains follow at residues 3–167 (PTLV…PEEE) and 176–349 (PKIA…AAAF). Residues 9-16 (GRPNVGKS), 56-60 (DTGGL), 119-122 (NKAE), 182-189 (GRPNVGKS), 229-233 (DTAGV), and 294-297 (NKWD) contribute to the GTP site. The KH-like domain maps to 350–436 (IKLSTPKLTR…RIQIKEDEGK (87 aa)). Residues 432–443 (EDEGKNPFEGKK) show a composition bias toward basic and acidic residues. Residues 432–469 (EDEGKNPFEGKKRAPLSESEATRMRRKKRVRRKVYGAD) are disordered. The segment covering 455–469 (MRRKKRVRRKVYGAD) has biased composition (basic residues).

Belongs to the TRAFAC class TrmE-Era-EngA-EngB-Septin-like GTPase superfamily. EngA (Der) GTPase family. Associates with the 50S ribosomal subunit.

Its function is as follows. GTPase that plays an essential role in the late steps of ribosome biogenesis. This chain is GTPase Der, found in Thiobacillus denitrificans (strain ATCC 25259 / T1).